A 502-amino-acid chain; its full sequence is Myocilin (502 aa).

A signal peptide spans 1 to 31 (MPSCAYCCSCGPKMPALQLLFLACLVWGMGA). The stretch at 82-183 (ADLESTKARV…QEVARLRRGQ (102 aa)) forms a coiled coil. The disordered stretch occupies residues 166–198 (ARRLEGSSQEVARLRRGQCPSTHHPSQDMLPGS). N229 carries an N-linked (GlcNAc...) asparagine glycan. Residues 242–501 (GCGVLMWVGE…MVTYDIKLSE (260 aa)) enclose the Olfactomedin-like domain. A disulfide bond links C243 and C431. 5 residues coordinate Ca(2+): D378, N426, A427, V475, and D476.

In terms of assembly, homodimer (via N-terminus). Can also form higher oligomers. Interacts with OLFM3, FN1, NRCAM, GLDN and NFASC. Interacts (via N-terminus) with MYL2. Interacts with SFRP1, FRZB, FZD7, FZD10, FZD1 and WIF1; regulates Wnt signaling. Interacts with SNTA1; regulates muscle hypertrophy. Interacts with ERBB2 and ERBB3; activates ERBB2-ERBB3 signaling pathway. Interacts with SNCG; affects its secretion and its aggregation. In terms of processing, palmitoylated. Post-translationally, undergoes a calcium-dependent proteolytic cleavage at Gln-225 by CAPN2 in the endoplasmic reticulum. The result is the production of two fragments, one of 35 kDa containing the C-terminal olfactomedin-like domain, and another of 20 kDa containing the N-terminal leucine zipper-like domain. Glycosylated. As to expression, highly expressed in skeletal muscle and retina. Also detected at lower levels in thyroid gland but not in other endocrine glands such as the adrenal or pituitary glands.

Its subcellular location is the secreted. It is found in the golgi apparatus. The protein resides in the cytoplasmic vesicle. It localises to the extracellular space. The protein localises to the extracellular matrix. Its subcellular location is the extracellular exosome. It is found in the mitochondrion. The protein resides in the mitochondrion intermembrane space. It localises to the mitochondrion inner membrane. The protein localises to the mitochondrion outer membrane. Its subcellular location is the rough endoplasmic reticulum. It is found in the cell projection. The protein resides in the cilium. It localises to the endoplasmic reticulum. Secreted glycoprotein regulating the activation of different signaling pathways in adjacent cells to control different processes including cell adhesion, cell-matrix adhesion, cytoskeleton organization and cell migration. Promotes substrate adhesion, spreading and formation of focal contacts. Negatively regulates cell-matrix adhesion and stress fiber assembly through Rho protein signal transduction. Modulates the organization of actin cytoskeleton by stimulating the formation of stress fibers through interactions with components of Wnt signaling pathways. Promotes cell migration through activation of PTK2 and the downstream phosphatidylinositol 3-kinase signaling. Plays a role in bone formation and promotes osteoblast differentiation in a dose-dependent manner through mitogen-activated protein kinase signaling. Mediates myelination in the peripheral nervous system through ERBB2/ERBB3 signaling. Plays a role as a regulator of muscle hypertrophy through the components of dystrophin-associated protein complex. Involved in positive regulation of mitochondrial depolarization. Plays a role in neurite outgrowth. May participate in the obstruction of fluid outflow in the trabecular meshwork. The sequence is that of Myocilin (Myoc) from Rattus norvegicus (Rat).